The primary structure comprises 433 residues: Probable M18 family aminopeptidase 2 (433 aa).

H79, H153, and H404 together coordinate Zn(2+).

This sequence belongs to the peptidase M18 family. Requires Zn(2+) as cofactor.

The sequence is that of Probable M18 family aminopeptidase 2 (apeB) from Mycobacterium bovis (strain ATCC BAA-935 / AF2122/97).